Consider the following 303-residue polypeptide: Ribonuclease P protein subunit p40 (303 aa).

Component of nuclear RNase P and RNase MRP ribonucleoproteins. RNase P consists of a catalytic RNA moiety and about 10 protein subunits; POP1, POP4, POP5, POP7, RPP14, RPP21, RPP25, RPP30, RPP38 and RPP40. Within the RNase P complex, POP1, POP7 and RPP25 form the 'finger' subcomplex, POP5, RPP14, RPP40 and homodimeric RPP30 form the 'palm' subcomplex, and RPP21, POP4 and RPP38 form the 'wrist' subcomplex. All subunits of the RNase P complex interact with the catalytic RNA. Several subunits of RNase P are also part of the RNase MRP complex. RNase MRP consists of a catalytic RNA moiety and about 8 protein subunits; POP1, POP7, RPP25, RPP30, RPP38, RPP40 and possibly also POP4 and POP5.

It is found in the nucleus. Its subcellular location is the nucleolus. Functionally, component of ribonuclease P, a ribonucleoprotein complex that generates mature tRNA molecules by cleaving their 5'-ends. Also a component of the MRP ribonuclease complex, which cleaves pre-rRNA sequences. In Bos taurus (Bovine), this protein is Ribonuclease P protein subunit p40 (RPP40).